The chain runs to 469 residues: Argininosuccinate lyase (469 aa).

The protein belongs to the lyase 1 family. Argininosuccinate lyase subfamily.

Its subcellular location is the cytoplasm. The catalysed reaction is 2-(N(omega)-L-arginino)succinate = fumarate + L-arginine. It participates in amino-acid biosynthesis; L-arginine biosynthesis; L-arginine from L-ornithine and carbamoyl phosphate: step 3/3. The sequence is that of Argininosuccinate lyase from Saccharophagus degradans (strain 2-40 / ATCC 43961 / DSM 17024).